Consider the following 134-residue polypeptide: Small ribosomal subunit protein uS11 (134 aa).

Belongs to the universal ribosomal protein uS11 family. Part of the 30S ribosomal subunit. Interacts with proteins S7 and S18. Binds to IF-3.

Its function is as follows. Located on the platform of the 30S subunit, it bridges several disparate RNA helices of the 16S rRNA. Forms part of the Shine-Dalgarno cleft in the 70S ribosome. This is Small ribosomal subunit protein uS11 from Paracidovorax citrulli (strain AAC00-1) (Acidovorax citrulli).